A 1048-amino-acid polypeptide reads, in one-letter code: NACHT, LRR and PYD domains-containing protein 8 (1048 aa).

The disordered stretch occupies residues 1–23 (MSDVNPPSDTPIPFSSSSTHSSH). Over residues 11–23 (PIPFSSSSTHSSH) the composition is skewed to low complexity. A Pyrin domain is found at 33 to 131 (PGSPCENGVM…NAILPTLEPE (99 aa)). The NACHT domain maps to 204–527 (KTVAIQGAPG…FYVLCFPQRL (324 aa)). An ATP-binding site is contributed by 210 to 217 (GAPGIGKT). LRR repeat units follow at residues 815-838 (NGHLKTLILRKNSLENCGAYYLSV), 839-861 (AQLERLSIENCNLTQLTCESLAS), 866-890 (SKMLTHLSLAENALKDEGAKHIWNA), 923-950 (NKTLKSLDLSFNSLKDDGVILLCEALKN), and 980-1007 (NQHLRHLDLSKNAIGVYGILTLCEAFSS). The interval 1029-1048 (PTPHPPDFTGKSDCLSQINP) is disordered.

This sequence belongs to the NLRP family.

It is found in the cytoplasm. Functionally, involved in inflammation. This is NACHT, LRR and PYD domains-containing protein 8 (NLRP8) from Homo sapiens (Human).